The following is a 252-amino-acid chain: Probable transcriptional regulatory protein all4276 (252 aa).

Belongs to the TACO1 family.

The protein localises to the cytoplasm. The polypeptide is Probable transcriptional regulatory protein all4276 (Nostoc sp. (strain PCC 7120 / SAG 25.82 / UTEX 2576)).